The primary structure comprises 170 residues: VIP peptides (170 aa).

The signal sequence occupies residues 1–20 (MDTRNKAQLLVLLTLLSVLF). Positions 21–79 (SQTSAWPLYRAPSALRLGDRIPFEGANEPDQVSLKEDIDMLQNALAENDTPYYDVSRNA) are excised as a propeptide. Residue S76 is modified to Phosphoserine. The residue at position 107 (M107) is a Methionine amide. N152 is subject to Asparagine amide. The propeptide occupies 156–170 (SSEGESPDFPEELEK).

The protein belongs to the glucagon family.

The protein resides in the secreted. VIP is a neuropeptide involved in a diverse array of physiological processes through activating the PACAP subfamily of class B1 G protein-coupled receptors: VIP receptor 1 (VPR1) and VIP receptor 2 (VPR2). Abundantly expressed throughout the CNS and peripheral nervous systems where they primarily exert neuroprotective and immune modulatory roles. Also causes vasodilation, lowers arterial blood pressure, stimulates myocardial contractility, increases glycogenolysis and relaxes the smooth muscle of trachea, stomach and gall bladder. In terms of biological role, PHM-27 and PHV-42 are two bioactive forms from proteolysis of the same precursor protein, that cause vasodilation. PHM-27 is a potent agonist of the calcitonin receptor CALCR, with similar efficacy as calcitonin. The polypeptide is VIP peptides (Homo sapiens (Human)).